The primary structure comprises 106 residues: Gibberellin-regulated protein 12 (106 aa).

A signal peptide spans 1 to 22 (MMKLIVVFVISSLLFATQFSNG).

This sequence belongs to the GASA family. Post-translationally, six disulfide bonds may be present.

Its subcellular location is the secreted. In terms of biological role, gibberellin-regulated protein that may function in hormonal controlled steps of development such as seed germination, flowering and seed maturation. This Arabidopsis thaliana (Mouse-ear cress) protein is Gibberellin-regulated protein 12 (GASA12).